The sequence spans 239 residues: MKKSIRFFIVSILLSPFASAQVKDFVIEPPIKNNLHIYKTFGVFGGKEYSANSMYLVTKKGVVLFDVPWEKIQYQSLMDTIKKRHNLPVVAVFATHSHDDRAGDLSFFNNKGIKTYATAKTNEFLKKDGKATSTEIIKTGKPYRIGGEEFVVDFLGEGHTADNVVVWFPKYNVLDGGCLVKSNSATDLGYIKEANVEQWPKTINKLKAKYSKATLIIPGHDEWKGGGHVEHTLELLNKK.

A signal peptide spans 1–20 (MKKSIRFFIVSILLSPFASA). Zn(2+)-binding residues include His-96, His-98, Asp-100, His-159, and Cys-178. Lys-181 provides a ligand contact to a beta-lactam. Residue His-220 participates in Zn(2+) binding.

It belongs to the metallo-beta-lactamase superfamily. Class-B beta-lactamase family. As to quaternary structure, monomer. Requires Zn(2+) as cofactor.

Its subcellular location is the periplasm. It catalyses the reaction a beta-lactam + H2O = a substituted beta-amino acid. Its activity is regulated as follows. Inhibited by chelating agents such as EDTA. Not susceptible to inactivation by the beta-lactamase-blocking agent clavulanic acid. In terms of biological role, class B beta-lactamase which confers resistance to the beta-lactam antibiotics, including penicillins, cephalosporins and carbapenems. Acts via hydrolysis of the beta-lactam ring. Has penicillin-, cephalosporin- and carbapenem-hydrolyzing activities. This Chryseobacterium indologenes (Flavobacterium indologenes) protein is Metallo-beta-lactamase IND-1.